Here is a 799-residue protein sequence, read N- to C-terminus: ATP-dependent DNA helicase Hel308 (799 aa).

ATP contacts are provided by residues Q29 and 47–54 (IPTASGKT). Residues 34 to 200 (EAGVTEGENL…WLDAGLVDSD (167 aa)) enclose the Helicase ATP-binding domain. Residues 145 to 148 (DEVH) carry the DEAH box motif. A Helicase C-terminal domain is found at 234–435 (QTAAIVRDTL…EPALRTHILA (202 aa)). 2 disordered regions span residues 522-566 (RGAS…DRDP) and 750-799 (NVLE…LGDF). Acidic residues predominate over residues 553 to 566 (LAEDADESDADRDP).

It belongs to the helicase family. Hel308 subfamily. In terms of assembly, monomer.

It catalyses the reaction Couples ATP hydrolysis with the unwinding of duplex DNA by translocating in the 3'-5' direction.. The enzyme catalyses ATP + H2O = ADP + phosphate + H(+). Functionally, DNA-dependent ATPase and 3'-5' DNA helicase that may be involved in repair of stalled replication forks. This chain is ATP-dependent DNA helicase Hel308, found in Haloarcula marismortui (strain ATCC 43049 / DSM 3752 / JCM 8966 / VKM B-1809) (Halobacterium marismortui).